Here is a 134-residue protein sequence, read N- to C-terminus: Small ribosomal subunit protein uS12 (134 aa).

Residue aspartate 89 is modified to 3-methylthioaspartic acid. The disordered stretch occupies residues 103-134; it reads DTAGVKDRKQGRSKYGAKRPKPGEAAATGKKK. The span at 113-122 shows a compositional bias: basic residues; it reads GRSKYGAKRP.

The protein belongs to the universal ribosomal protein uS12 family. In terms of assembly, part of the 30S ribosomal subunit. Contacts proteins S8 and S17. May interact with IF1 in the 30S initiation complex.

Functionally, with S4 and S5 plays an important role in translational accuracy. In terms of biological role, interacts with and stabilizes bases of the 16S rRNA that are involved in tRNA selection in the A site and with the mRNA backbone. Located at the interface of the 30S and 50S subunits, it traverses the body of the 30S subunit contacting proteins on the other side and probably holding the rRNA structure together. The combined cluster of proteins S8, S12 and S17 appears to hold together the shoulder and platform of the 30S subunit. The polypeptide is Small ribosomal subunit protein uS12 (Thermosynechococcus vestitus (strain NIES-2133 / IAM M-273 / BP-1)).